We begin with the raw amino-acid sequence, 321 residues long: uncharacterized protein (321 aa).

This is an uncharacterized protein from Acanthamoeba polyphaga mimivirus (APMV).